A 107-amino-acid polypeptide reads, in one-letter code: Pyrimidine/purine nucleoside phosphorylase (107 aa).

This sequence belongs to the nucleoside phosphorylase PpnP family.

It catalyses the reaction a purine D-ribonucleoside + phosphate = a purine nucleobase + alpha-D-ribose 1-phosphate. The catalysed reaction is adenosine + phosphate = alpha-D-ribose 1-phosphate + adenine. It carries out the reaction cytidine + phosphate = cytosine + alpha-D-ribose 1-phosphate. The enzyme catalyses guanosine + phosphate = alpha-D-ribose 1-phosphate + guanine. It catalyses the reaction inosine + phosphate = alpha-D-ribose 1-phosphate + hypoxanthine. The catalysed reaction is thymidine + phosphate = 2-deoxy-alpha-D-ribose 1-phosphate + thymine. It carries out the reaction uridine + phosphate = alpha-D-ribose 1-phosphate + uracil. The enzyme catalyses xanthosine + phosphate = alpha-D-ribose 1-phosphate + xanthine. Catalyzes the phosphorolysis of diverse nucleosides, yielding D-ribose 1-phosphate and the respective free bases. Can use uridine, adenosine, guanosine, cytidine, thymidine, inosine and xanthosine as substrates. Also catalyzes the reverse reactions. This chain is Pyrimidine/purine nucleoside phosphorylase, found in Azoarcus sp. (strain BH72).